We begin with the raw amino-acid sequence, 338 residues long: MNDKLQEEHNEKDTTSQINGFTPPHMSIDFHSNNNSNIIETIGVSKRLGNSVLSELDSRASSKFEFLKDQSEQQYNGDKNNEPKSGSYNINEFFQAKHDSQFGQMESLDTHYTLLHTPKRKSQHAIPQDRSDSMKRSRPSRSIPYTTPVVNDITRRIRRLKLRNSLVNGNDIVARARSMQANSNINSIKNTPLSKPKPFMHKPNFLMPTTNSLNKINSAHRNTSSSSTASSIPRSKVHRSTSIRDLHAKTKPVERTPVAQGTNSQLKNSVSVFDRLYKQTTFSRSTSMNNLSSGTSAKSKEHTNVKTRLVKSKTSGSLSSNLKQSTATGTKSDRPIWR.

Residues 1–14 (MNDKLQEEHNEKDT) show a composition bias toward basic and acidic residues. 3 disordered regions span residues 1-29 (MNDK…MSID), 67-88 (LKDQ…SGSY), and 116-146 (HTPK…IPYT). A compositionally biased stretch (polar residues) spans 72–88 (EQQYNGDKNNEPKSGSY). At Ser-165 the chain carries Phosphoserine. Disordered regions lie at residues 210-263 (TNSL…QGTN) and 284-338 (RSTS…PIWR). A compositionally biased stretch (low complexity) spans 216–234 (INSAHRNTSSSSTASSIPR). Residues 242 to 254 (SIRDLHAKTKPVE) are compositionally biased toward basic and acidic residues. Composition is skewed to polar residues over residues 284-297 (RSTS…GTSA) and 312-330 (SKTS…ATGT).

This sequence belongs to the SHE1 family.

It localises to the cytoplasm. Its subcellular location is the cytoskeleton. It is found in the spindle. The protein localises to the bud neck. May have a role related to the spindle integrity function of the DAM1 complex, which is essential for proper chromosome segregation. Causes growth arrest when highly overexpressed. This Saccharomyces cerevisiae (strain YJM789) (Baker's yeast) protein is Mitotic spindle-associated protein SHE1 (SHE1).